We begin with the raw amino-acid sequence, 322 residues long: MAFSKGLIFAMIFAVLAIVKPSEAALDAHYYDQSCPAAEKIILETVRNATLYDPKVPARLLRMFFHDCFIRGCDASILLDSTRSNQAEKDGPPNISVRSFYVIEDAKRKLEKACPRTVSCADVIAIAARDVVTLSGGPYWSVLKGRKDGTISRANETRNLPPPTFNVSQLIQSFAARGLSVKDMVTLSGGHTIGFSHCSSFESRLQNFSKFHDIDPSMNYAFAQTLKKKCPRTSNRGKNAGTVLDSTSSVFDNVYYKQILSGKGVFGSDQALLGDSRTKWIVETFAQDQKAFFREFAASMVKLGNFGVKETGQVRVNTRFVN.

The signal sequence occupies residues 1 to 24; the sequence is MAFSKGLIFAMIFAVLAIVKPSEA. 2 cysteine pairs are disulfide-bonded: Cys-35-Cys-114 and Cys-68-Cys-73. Catalysis depends on His-66, which acts as the Proton acceptor. Positions 67, 72, 74, and 76 each coordinate Ca(2+). Asn-155 is a glycosylation site (N-linked (GlcNAc...) asparagine). Pro-161 provides a ligand contact to substrate. N-linked (GlcNAc...) asparagine glycosylation occurs at Asn-166. His-191 provides a ligand contact to heme b. Thr-192 is a binding site for Ca(2+). A disulfide bridge connects residues Cys-198 and Cys-230. Asn-207 is a glycosylation site (N-linked (GlcNAc...) asparagine). Ca(2+) contacts are provided by Asp-245, Thr-247, and Asp-252.

The protein belongs to the peroxidase family. Classical plant (class III) peroxidase subfamily. The cofactor is heme b. Ca(2+) is required as a cofactor.

The protein resides in the secreted. It catalyses the reaction 2 a phenolic donor + H2O2 = 2 a phenolic radical donor + 2 H2O. Functionally, removal of H(2)O(2), oxidation of toxic reductants, biosynthesis and degradation of lignin, suberization, auxin catabolism, response to environmental stresses such as wounding, pathogen attack and oxidative stress. These functions might be dependent on each isozyme/isoform in each plant tissue. This Arabidopsis thaliana (Mouse-ear cress) protein is Peroxidase 66 (PER66).